Here is a 409-residue protein sequence, read N- to C-terminus: L-cysteine:1D-myo-inositol 2-amino-2-deoxy-alpha-D-glucopyranoside ligase (409 aa).

Position 43 (C43) interacts with Zn(2+). Residues 43 to 46 (CGIT), T58, and 81 to 83 (NVT) contribute to the L-cysteinyl-5'-AMP site. A 'HIGH' region motif is present at residues 45–55 (ITPYDATHMGH). The 'ERGGDP' region motif lies at 183-188 (ERGGDP). W224 provides a ligand contact to L-cysteinyl-5'-AMP. C228 contributes to the Zn(2+) binding site. 246–248 (GSD) is a binding site for L-cysteinyl-5'-AMP. Position 253 (H253) interacts with Zn(2+). V280 provides a ligand contact to L-cysteinyl-5'-AMP. The short motif at 286-290 (KMSKS) is the 'KMSKS' region element.

Belongs to the class-I aminoacyl-tRNA synthetase family. MshC subfamily. As to quaternary structure, monomer. Zn(2+) is required as a cofactor.

It catalyses the reaction 1D-myo-inositol 2-amino-2-deoxy-alpha-D-glucopyranoside + L-cysteine + ATP = 1D-myo-inositol 2-(L-cysteinylamino)-2-deoxy-alpha-D-glucopyranoside + AMP + diphosphate + H(+). In terms of biological role, catalyzes the ATP-dependent condensation of GlcN-Ins and L-cysteine to form L-Cys-GlcN-Ins. This chain is L-cysteine:1D-myo-inositol 2-amino-2-deoxy-alpha-D-glucopyranoside ligase, found in Streptomyces scabiei (strain 87.22).